Reading from the N-terminus, the 160-residue chain is Cytochrome b6-f complex subunit 4 (160 aa).

The next 3 helical transmembrane spans lie at Leu-36–Val-56, Leu-95–Glu-115, and Thr-131–Leu-151.

Belongs to the cytochrome b family. PetD subfamily. The 4 large subunits of the cytochrome b6-f complex are cytochrome b6, subunit IV (17 kDa polypeptide, PetD), cytochrome f and the Rieske protein, while the 4 small subunits are PetG, PetL, PetM and PetN. The complex functions as a dimer.

It localises to the cellular thylakoid membrane. In terms of biological role, component of the cytochrome b6-f complex, which mediates electron transfer between photosystem II (PSII) and photosystem I (PSI), cyclic electron flow around PSI, and state transitions. The protein is Cytochrome b6-f complex subunit 4 of Trichormus variabilis (strain ATCC 29413 / PCC 7937) (Anabaena variabilis).